A 712-amino-acid polypeptide reads, in one-letter code: Polyribonucleotide nucleotidyltransferase (712 aa).

Positions 487 and 493 each coordinate Mg(2+). The KH domain occupies 554–613 (PKIITMTINPDKIRDVIGPSGKQINKIIEETGVKIDIEQDGTVFISSINQEMNDKAKKII). One can recognise an S1 motif domain in the interval 623 to 691 (GEIYEGKVKR…KQGRVNLSRK (69 aa)).

The protein belongs to the polyribonucleotide nucleotidyltransferase family. Mg(2+) serves as cofactor.

It is found in the cytoplasm. It carries out the reaction RNA(n+1) + phosphate = RNA(n) + a ribonucleoside 5'-diphosphate. In terms of biological role, involved in mRNA degradation. Catalyzes the phosphorolysis of single-stranded polyribonucleotides processively in the 3'- to 5'-direction. This Bacillus anthracis (strain CDC 684 / NRRL 3495) protein is Polyribonucleotide nucleotidyltransferase.